The sequence spans 487 residues: WD repeat, SAM and U-box domain-containing protein 1 (487 aa).

7 WD repeats span residues 10–47 (SHRD…ELPF), 52–93 (GHGY…AVLE), 95–134 (PGRS…LRRT), 137–176 (VNDT…LHAE), 179–227 (AHDL…SAGI), 237–276 (GQSA…LLYT), and 279–318 (QHDR…SAQG). In terms of domain architecture, SAM spans 347 to 411 (WSEEEVLAWL…MKKIEELKMV (65 aa)). The U-box domain maps to 416–487 (GTPDEFLCPI…MAIFRWSTSQ (72 aa)).

The sequence is that of WD repeat, SAM and U-box domain-containing protein 1 (wdsub1) from Danio rerio (Zebrafish).